A 270-amino-acid polypeptide reads, in one-letter code: Tryptophan synthase alpha chain (270 aa).

Catalysis depends on proton acceptor residues Glu-49 and Asp-60.

This sequence belongs to the TrpA family. As to quaternary structure, tetramer of two alpha and two beta chains.

It catalyses the reaction (1S,2R)-1-C-(indol-3-yl)glycerol 3-phosphate + L-serine = D-glyceraldehyde 3-phosphate + L-tryptophan + H2O. It functions in the pathway amino-acid biosynthesis; L-tryptophan biosynthesis; L-tryptophan from chorismate: step 5/5. In terms of biological role, the alpha subunit is responsible for the aldol cleavage of indoleglycerol phosphate to indole and glyceraldehyde 3-phosphate. In Paraburkholderia phytofirmans (strain DSM 17436 / LMG 22146 / PsJN) (Burkholderia phytofirmans), this protein is Tryptophan synthase alpha chain.